Reading from the N-terminus, the 602-residue chain is Cytokine-like nuclear factor N-PAC (602 aa).

A phosphoserine mark is found at Ser-8 and Ser-10. The 60-residue stretch at 22 to 81 (PKDLIWAKMKGFTPWPGMIVDPPLDLLSQQRRANTKCVFFFGSRNFAWIEENNIKPFEGP) folds into the PWWP domain. Residues 162–262 (GSPDEGDGLD…ASSTPTGRRR (101 aa)) form a disordered region. Composition is skewed to polar residues over residues 176–188 (ADSS…SPAV), 204–217 (AATS…SAKS), and 224–233 (SAQQSPSGPS). Ser-224, Ser-228, and Ser-243 each carry phosphoserine. Positions 309-602 (RDIVPSEQTF…SSAVFVRSRF (294 aa)) are dehydrogenase domain. NAD(+) is bound by residues 319 to 333 (GFLG…IVKD), Thr-411, and Arg-554.

It belongs to the HIBADH-related family. NP60 subfamily. Binds to mononucleosomes. Interacts with male-specific lethal (MSL) histone acetyltransferase complex at least composed of mof, msl-1, msl-2 and msl-3.

The protein localises to the chromosome. Functionally, nucleosome-destabilizing factor that is recruited to genes during transcriptional activation and colocalizes with a subset of trimethylated 'Lys-36' histone H3 (H3K36me3)-enriched regions. Binds DNA (in vitro). Facilitates Pol II transcription through nucleosomes. Facilitates male-specific lethal (MSL) histone acetyltransferase complex targeting to active genes on the X chromosome. Stimulates the acetylation of 'Lys-56' of nucleosomal histone H3 (H3K56ac) by nej. May have oxidoreductase activity. This is Cytokine-like nuclear factor N-PAC from Drosophila melanogaster (Fruit fly).